A 236-amino-acid polypeptide reads, in one-letter code: Purine nucleoside phosphorylase DeoD-type (236 aa).

Histidine 5 is a binding site for a purine D-ribonucleoside. Phosphate contacts are provided by residues glycine 21, arginine 25, arginine 44, and 88–91 (RVGS). Residues 180-182 (EME) and 204-205 (SD) contribute to the a purine D-ribonucleoside site. Catalysis depends on aspartate 205, which acts as the Proton donor.

Belongs to the PNP/UDP phosphorylase family. Homohexamer; trimer of homodimers.

It carries out the reaction a purine D-ribonucleoside + phosphate = a purine nucleobase + alpha-D-ribose 1-phosphate. It catalyses the reaction a purine 2'-deoxy-D-ribonucleoside + phosphate = a purine nucleobase + 2-deoxy-alpha-D-ribose 1-phosphate. Its function is as follows. Catalyzes the reversible phosphorolytic breakdown of the N-glycosidic bond in the beta-(deoxy)ribonucleoside molecules, with the formation of the corresponding free purine bases and pentose-1-phosphate. The protein is Purine nucleoside phosphorylase DeoD-type of Psychromonas ingrahamii (strain DSM 17664 / CCUG 51855 / 37).